A 272-amino-acid chain; its full sequence is Phosphate import ATP-binding protein PstB 1 (272 aa).

Residues 26–267 form the ABC transporter domain; the sequence is ITIENLDLHY…PMKKQTEDYI (242 aa). 58 to 65 is a binding site for ATP; sequence GPSGCGKS.

This sequence belongs to the ABC transporter superfamily. Phosphate importer (TC 3.A.1.7) family. As to quaternary structure, the complex is composed of two ATP-binding proteins (PstB), two transmembrane proteins (PstC and PstA) and a solute-binding protein (PstS).

It localises to the cell inner membrane. It carries out the reaction phosphate(out) + ATP + H2O = ADP + 2 phosphate(in) + H(+). Its function is as follows. Part of the ABC transporter complex PstSACB involved in phosphate import. Responsible for energy coupling to the transport system. This is Phosphate import ATP-binding protein PstB 1 from Vibrio vulnificus (strain YJ016).